The primary structure comprises 125 residues: Large ribosomal subunit protein bL12 (125 aa).

Belongs to the bacterial ribosomal protein bL12 family. In terms of assembly, homodimer. Part of the ribosomal stalk of the 50S ribosomal subunit. Forms a multimeric L10(L12)X complex, where L10 forms an elongated spine to which 2 to 4 L12 dimers bind in a sequential fashion. Binds GTP-bound translation factors.

Forms part of the ribosomal stalk which helps the ribosome interact with GTP-bound translation factors. Is thus essential for accurate translation. The chain is Large ribosomal subunit protein bL12 from Polaromonas sp. (strain JS666 / ATCC BAA-500).